We begin with the raw amino-acid sequence, 299 residues long: GTPase Era (299 aa).

The Era-type G domain occupies 5–172; it reads KSGFVSIIGR…IDVLKTYLPE (168 aa). Residues 13 to 20 form a G1 region; that stretch reads GRPNVGKS. Residue 13–20 coordinates GTP; sequence GRPNVGKS. Residues 39-43 are G2; that stretch reads QTTRN. The G3 stretch occupies residues 60–63; that stretch reads DTPG. Residues 60 to 64 and 122 to 125 each bind GTP; these read DTPGI and NKID. The segment at 122–125 is G4; it reads NKID. The segment at 151–153 is G5; it reads ISA. Residues 203-280 enclose the KH type-2 domain; the sequence is TSEEIPHAIG…YLELWVKVQK (78 aa).

The protein belongs to the TRAFAC class TrmE-Era-EngA-EngB-Septin-like GTPase superfamily. Era GTPase family. Monomer.

Its subcellular location is the cytoplasm. It localises to the cell membrane. Functionally, an essential GTPase that binds both GDP and GTP, with rapid nucleotide exchange. Plays a role in 16S rRNA processing and 30S ribosomal subunit biogenesis and possibly also in cell cycle regulation and energy metabolism. This Staphylococcus haemolyticus (strain JCSC1435) protein is GTPase Era.